A 435-amino-acid polypeptide reads, in one-letter code: Probable exopolygalacturonase B (435 aa).

Positions 1-15 (MKFFLATLFASAVSS) are cleaved as a signal peptide. N-linked (GlcNAc...) asparagine glycosylation is found at N59, N184, and N224. PbH1 repeat units lie at residues 208-239 (SKDV…DSLN), 240-261 (VDGL…SPKP), 262-283 (NTTN…SMGS), 294-315 (IEHA…RLKA), and 326-347 (INNI…VLDQ). D254 serves as the catalytic Proton donor. C256 and C273 are joined by a disulfide. Residues N262 and N274 are each glycosylated (N-linked (GlcNAc...) asparagine). H277 is an active-site residue. N-linked (GlcNAc...) asparagine glycosylation is found at N301, N328, N365, and N373. The PbH1 6 repeat unit spans residues 366 to 388 (VTNILFENISGTSSGKNGKVVAD). C391 and C397 form a disulfide bridge. N406 carries an N-linked (GlcNAc...) asparagine glycan.

It belongs to the glycosyl hydrolase 28 family.

The protein resides in the secreted. It catalyses the reaction [(1-&gt;4)-alpha-D-galacturonosyl](n) + H2O = alpha-D-galacturonate + [(1-&gt;4)-alpha-D-galacturonosyl](n-1). In terms of biological role, specific in hydrolyzing the terminal glycosidic bond of polygalacturonic acid and oligogalacturonates. This is Probable exopolygalacturonase B (pgxB) from Aspergillus flavus (strain ATCC 200026 / FGSC A1120 / IAM 13836 / NRRL 3357 / JCM 12722 / SRRC 167).